Consider the following 180-residue polypeptide: Kappa-casein (180 aa).

The first 21 residues, 1–21 (MMKHFLLVVNILAVTLPFLAA), serve as a signal peptide directing secretion. O-linked (GalNAc...) threonine glycosylation is found at threonine 132, threonine 142, threonine 147, and threonine 153. Serine 160 carries the post-translational modification Phosphoserine; alternate. The O-linked (GalNAc...) serine; alternate glycan is linked to serine 160.

This sequence belongs to the kappa-casein family. In terms of tissue distribution, mammary gland specific. Secreted in milk.

Its subcellular location is the secreted. Its function is as follows. Kappa-casein stabilizes micelle formation, preventing casein precipitation in milk. This chain is Kappa-casein (CSN3), found in Oryctolagus cuniculus (Rabbit).